We begin with the raw amino-acid sequence, 301 residues long: 33 kDa chaperonin (301 aa).

Cystine bridges form between Cys240–Cys242 and Cys273–Cys276.

The protein belongs to the HSP33 family. In terms of processing, under oxidizing conditions two disulfide bonds are formed involving the reactive cysteines. Under reducing conditions zinc is bound to the reactive cysteines and the protein is inactive.

It localises to the cytoplasm. Redox regulated molecular chaperone. Protects both thermally unfolding and oxidatively damaged proteins from irreversible aggregation. Plays an important role in the bacterial defense system toward oxidative stress. This chain is 33 kDa chaperonin, found in Rippkaea orientalis (strain PCC 8801 / RF-1) (Cyanothece sp. (strain PCC 8801)).